Consider the following 36-residue polypeptide: Alpha-conotoxin-like Pu1.3 (36 aa).

A propeptide spanning residues 1 to 21 (SDGRNAGADRKGFGLISQMFK) is cleaved from the precursor. Cystine bridges form between Cys-24–Cys-30 and Cys-25–Cys-36.

The protein belongs to the conotoxin A superfamily. In terms of tissue distribution, expressed by the venom duct.

The protein localises to the secreted. In terms of biological role, alpha-conotoxins act on postsynaptic membranes, they bind to the nicotinic acetylcholine receptors (nAChR) and thus inhibit them. This is Alpha-conotoxin-like Pu1.3 from Conus pulicarius (Flea-bitten cone).